Here is a 76-residue protein sequence, read N- to C-terminus: Endothelin-1 (76 aa).

An endothelin-like region spans residues 30–44 (CQCASQKDKKCWNFC).

This sequence belongs to the endothelin/sarafotoxin family.

Its subcellular location is the secreted. Endothelins are endothelium-derived vasoconstrictor peptides. Probable ligand for G-protein coupled receptors EDNRA and EDNRB which activates PTK2B, BCAR1, BCAR3 and, GTPases RAP1 and RHOA cascade in glomerular mesangial cells. Also binds the DEAR/FBXW7-AS1 receptor. Promotes mesenteric arterial wall remodeling via activation of ROCK signaling and subsequent colocalization of NFATC3 with F-actin filaments. NFATC3 then translocates to the nucleus where it subsequently promotes the transcription of the smooth muscle hypertrophy and differentiation marker ACTA2. This Macaca fascicularis (Crab-eating macaque) protein is Endothelin-1 (EDN1).